The primary structure comprises 465 residues: MLPLVALVGRPNVGKSTLFNALTLTRDALVHDQPGVTRDRHYGVCRIDGQPLFAVVDTGGMVGKEDGLAGATARQARLAVAEADVVLFVVNVREGASALDDDILAWLRKLSQPTLLVINKIDGVSDTTVHSEFAHYGFSDVVPVSAAHRQGLDDLIEQVLAWLPERSIGEAFNEDSERIHIAFVGRPNVGKSTLVNRLLGEERMIVSDVPGTTRDSITVDLERDELRYRLVDTAGLRRKSKVEEAVEKFSAFKTLQAIEQCQVAVLLLDAGEGVTDQDATVLAAILDAGKALVVAMNKWDGLATYQREQAEDLLSRKLGFVNWAEVVRLSAKHGSGLRELFRAIHRAHVSALRQFSTSEVNKALEIAYQTAPPPSIRGHVSKLRYVHPAGSNPPTFIVHGTRLKVLPDTYKRYLENFFRKRFKLVGTPVRFLFREGDNPYEGRKNVLSERQIQRRRRLMRHVKRK.

2 EngA-type G domains span residues 3 to 167 (PLVA…PERS) and 179 to 352 (IHIA…VSAL). Residues 9 to 16 (GRPNVGKS), 57 to 61 (DTGGM), 119 to 122 (NKID), 185 to 192 (GRPNVGKS), 232 to 236 (DTAGL), and 297 to 300 (NKWD) each bind GTP. The 85-residue stretch at 353 to 437 (RQFSTSEVNK…PVRFLFREGD (85 aa)) folds into the KH-like domain.

This sequence belongs to the TRAFAC class TrmE-Era-EngA-EngB-Septin-like GTPase superfamily. EngA (Der) GTPase family. As to quaternary structure, associates with the 50S ribosomal subunit.

GTPase that plays an essential role in the late steps of ribosome biogenesis. The sequence is that of GTPase Der from Xylella fastidiosa (strain M23).